The chain runs to 117 residues: uncharacterized protein (117 aa).

The protein localises to the mitochondrion. This is an uncharacterized protein from Arabidopsis thaliana (Mouse-ear cress).